Reading from the N-terminus, the 392-residue chain is Acetyl-CoA acetyltransferase (392 aa).

Residue Cys-85 is the Acyl-thioester intermediate of the active site. CoA is bound by residues Cys-206, Ser-207, Val-209, and Lys-332. His-336 (proton acceptor) is an active-site residue.

It belongs to the thiolase-like superfamily. Thiolase family. In terms of assembly, interacts with HMG-CoA synthase (HMGCS) that catalyzes the second step in the pathway and with a DUF35 protein. The acetoacetyl-CoA thiolase/HMG-CoA synthase complex channels the intermediate via a fused CoA-binding site, which allows for efficient coupling of the endergonic thiolase reaction with the exergonic HMGCS reaction.

It catalyses the reaction 2 acetyl-CoA = acetoacetyl-CoA + CoA. It functions in the pathway metabolic intermediate biosynthesis; (R)-mevalonate biosynthesis; (R)-mevalonate from acetyl-CoA: step 1/3. Catalyzes the condensation of two acetyl-coA molecules into acetoacetyl-CoA. Functions in the mevalonate (MVA) pathway leading to isopentenyl diphosphate (IPP), a key precursor for the biosynthesis of isoprenoid compounds that are building blocks of archaeal membrane lipids. The protein is Acetyl-CoA acetyltransferase of Methanothermococcus thermolithotrophicus (Methanococcus thermolithotrophicus).